Here is a 1349-residue protein sequence, read N- to C-terminus: MDTPSSGTIDLEHGEAGLRKRLTLTFRSVSVHVTAPDAALGDTLLSVADPRQFLGFLKGSRPKRTILKDVSGQVKPGEMLLVLGRPGSGCTSLLRVLSNDRESFDEVIGETRYGSMDHVAARRFRQQIMFNNEDDVHFPTLTVNRTMKFALRNKVPRERPDGQGSKEFVQEQRDNILSALGIRHTTKTLVGNEFIRGVSGGERKRVSLAEVIAGQSPIQVWDNPTRGLDSKTAVEFARLLRREADMNQKTMVATMYQAGNGIYNEFDQVLVLADGRVTYYGPRQLAKSYFEDMGFVCPKGANVADFLTSVTVLTERIVRPGMEDKVPSTAEEFEARYRQSDIHQKAMEGFDPPEKLTHEVDELTAAVASEKRKRHLPRSPSVYTTSLWEQIQACTIRQFQIMAGDRLSLIIKVVSAILQALVCGSLFYNLKDDSSSIFLRPGALFFPVLYFLLESMSETTASFMGRPILSRQKRFGFYRPTAFCIANAITDIPVVLVQVSCFCIILYFMAALQMDAGRFFTYWIIVIANTLCFMQMFRAVGALCKRFGNASKITGLLSTIFFVYGGYLIPYEKMHVWFRWIFYLNPGAYAFEALMANEFVGKSLQCVQPDYIPYGSGYPGSESPYRGCSIPGSEGDVILGAAYIRAQYNYSWHHIWRSFGVIIGFWVFFIVLTALGLELLNSQGGSSVLLYKRGSQKTRSEDTTTPVQEAARASHAKQSTFTWHDLDYHVPYQGQKKQLLDKVFGFVKPGNLVALMGCSGAGKTTLLDVLAQRKDSGEIYGSILIDGRPQGISFQRTTGYCEQMDVHEPTATVREALVFSALLRQPAHVPREEKLAYVDHIIDLLELRDISDALIGVPGAGLSIEQRKRVTLGVELVAKPTLLFLDEPTSGLDGQSAYNIIRFLRKLVDGGQAVLCTIHQPSAVLFEAFDSLLLLARGGKMAYFGETGKDSQTVLDYFARHGAPCPPDENPAEHIVEVIQGNTDKPIDWVQVWNESEEKQRALAQLQTLNARGKADADYVEDTADYATSKWFQFTMVTKRLMVQLWRSPDYVWNKVILHVFAALFSGFTFWKIGDGAFDLQLRLFAIFNFIFVAPGCINQMQPFFLHNRDIFEAREKKSKIYHWLAFIGAQTVSEIPYLILCATLYFACWYFTAGFPTTASISGHMYLQMIFYEFLYTSIGQGIAAYAPNEYFAAVMNPVLIGAGLVSFCGVVVPFSQMQPFWRDWLYYLDPFTYLVGGLLGEVLWDVEVRCDPSELVRFRAPLGQTCGEYMAAFLAEKPGYLVDGNATACEFCQYSTGADYARTFNLKERYYSWRDTGITALFCVSSYAMVFLMMKLRSKKTKSARSE.

Positions Arg51 to Lys299 constitute an ABC transporter 1 domain. Asn144 carries an N-linked (GlcNAc...) asparagine glycan. 4 consecutive transmembrane segments (helical) span residues Leu407–Phe427, Ser436–Met456, Ile492–Leu512, and Trp523–Leu543. Asn549 carries N-linked (GlcNAc...) asparagine glycosylation. The next 2 membrane-spanning stretches (helical) occupy residues Ala550 to Pro570 and Trp580 to Val600. Asn649 is a glycosylation site (N-linked (GlcNAc...) asparagine). Residues Phe659–Leu679 form a helical membrane-spanning segment. An ABC transporter 2 domain is found at Phe721–Ala963. Gly757 to Thr764 provides a ligand contact to ATP. Residue Asn994 is glycosylated (N-linked (GlcNAc...) asparagine). 6 helical membrane-spanning segments follow: residues Val1056 to Gly1076, Phe1085 to Phe1105, Ile1121 to Ala1143, Met1166 to Ala1186, Phe1193 to Val1213, and Trp1226 to Trp1246. Asn1287 carries N-linked (GlcNAc...) asparagine glycosylation. Residues Thr1318–Leu1338 traverse the membrane as a helical segment.

The protein belongs to the ABC transporter superfamily. ABCG family. PDR (TC 3.A.1.205) subfamily.

It localises to the cell membrane. ABC efflux transporter that seems not to be able to transport azoles, nor rhodamine 6G (R-6G), a known substrate for many ABC transporters. The protein is ABC multidrug transporter G of Aspergillus fumigatus (strain ATCC MYA-4609 / CBS 101355 / FGSC A1100 / Af293) (Neosartorya fumigata).